Reading from the N-terminus, the 130-residue chain is MIGNWNYGTGRRKSAVARVFIKAGKGDIVVNGKPISDYFSRETSLMIVRQPLELTNHAQTFDIKVNVSGGGETGQAGAVRHGITRALIDYDATLKPALSNAGFVTRDAREVERKKVGLHKARRAKQFSKR.

The protein belongs to the universal ribosomal protein uS9 family.

This Burkholderia mallei (strain NCTC 10247) protein is Small ribosomal subunit protein uS9.